A 169-amino-acid polypeptide reads, in one-letter code: Peptide methionine sulfoxide reductase MsrA (169 aa).

Cys10 is a catalytic residue.

Belongs to the MsrA Met sulfoxide reductase family.

The catalysed reaction is L-methionyl-[protein] + [thioredoxin]-disulfide + H2O = L-methionyl-(S)-S-oxide-[protein] + [thioredoxin]-dithiol. It carries out the reaction [thioredoxin]-disulfide + L-methionine + H2O = L-methionine (S)-S-oxide + [thioredoxin]-dithiol. Functionally, has an important function as a repair enzyme for proteins that have been inactivated by oxidation. Catalyzes the reversible oxidation-reduction of methionine sulfoxide in proteins to methionine. The sequence is that of Peptide methionine sulfoxide reductase MsrA from Streptococcus pyogenes serotype M28 (strain MGAS6180).